The chain runs to 361 residues: MVHAETFSRPLSRNEVVGLIFRLTIFGAVTYFTIKWMVDAIDPTRKQKVEAQKQAEKLMKQIGVKNVKLSEYEMSIAAHLVDPLNMHVTWSDIAGLDDVITDLKDTVILPIKKKHLFENSRLLQPPKGVLLYGPPGCGKTLIAKATAKEAGCRFINLQPSTLTDKWYGESQKLAAAVFSLAIKLQPSIIFIDEIDSFLRNRSSSDHEATAMMKAQFMSLWDGLDTDHSCQVIVMGATNRPQDLDSAIMRRMPTRFHINQPALKQREAILKLILKNENVDRHVDLLEVAQETDGFSGSDLKEMCRDAALLCVREYVNSTSEESHDEDEIRPVQQQDLHRAIEKMKKSKDAAFQNVLTHVCLD.

The Mitochondrial intermembrane portion of the chain corresponds to 1–15; that stretch reads MVHAETFSRPLSRNE. Residues 16-32 form a helical membrane-spanning segment; sequence VVGLIFRLTIFGAVTYF. The Cytoplasmic segment spans residues 33 to 361; sequence TIKWMVDAID…QNVLTHVCLD (329 aa). ATP is bound at residue 133-140; sequence GPPGCGKT. Phosphoserine is present on S322.

This sequence belongs to the AAA ATPase family. MSP1 subfamily. In terms of assembly, interacts with GRIA2 and GRIP1 in an ATP-dependent manner. ATAD1-catalyzed ATP hydrolysis disrupts not only its binding to GRIA2 and GRIP1, but also interaction between GRIP1 and GRIA2, leading to AMPAR complex disassembly.

The protein resides in the mitochondrion outer membrane. It localises to the peroxisome membrane. Its subcellular location is the postsynaptic cell membrane. It carries out the reaction [protein]-with a C-terminal TM segment(out) + ATP + H2O = [protein]-with a C-terminal TM segment(in) + ADP + phosphate + H(+). In terms of biological role, outer mitochondrial translocase required to remove mislocalized tail-anchored transmembrane proteins on mitochondria. Specifically recognizes and binds tail-anchored transmembrane proteins: acts as a dislocase that mediates the ATP-dependent extraction of mistargeted tail-anchored transmembrane proteins from the mitochondrion outer membrane. Also plays a critical role in regulating the surface expression of AMPA receptors (AMPAR), thereby regulating synaptic plasticity and learning and memory. Required for NMDA-stimulated AMPAR internalization and inhibition of GRIA1 and GRIA2 recycling back to the plasma membrane; these activities are ATPase-dependent. The sequence is that of Outer mitochondrial transmembrane helix translocase from Bos taurus (Bovine).